The chain runs to 399 residues: Elongation factor Tu (399 aa).

The 200-residue stretch at 10 to 209 (KPHVNIGTIG…AVDSYIPTPT (200 aa)) folds into the tr-type G domain. The interval 19 to 26 (GHVDHGKT) is G1. 19–26 (GHVDHGKT) serves as a coordination point for GTP. T26 contributes to the Mg(2+) binding site. Positions 60 to 64 (GITIA) are G2. Positions 81 to 84 (DCPG) are G3. Residues 81–85 (DCPGH) and 136–139 (NKAD) contribute to the GTP site. The tract at residues 136 to 139 (NKAD) is G4. Residues 174-176 (SAL) are G5.

Belongs to the TRAFAC class translation factor GTPase superfamily. Classic translation factor GTPase family. EF-Tu/EF-1A subfamily. As to quaternary structure, monomer.

The protein resides in the cytoplasm. The enzyme catalyses GTP + H2O = GDP + phosphate + H(+). Functionally, GTP hydrolase that promotes the GTP-dependent binding of aminoacyl-tRNA to the A-site of ribosomes during protein biosynthesis. This is Elongation factor Tu from Campylobacter jejuni (strain RM1221).